A 218-amino-acid polypeptide reads, in one-letter code: Response regulator UvrY (218 aa).

The Response regulatory domain maps to 3-119; sequence NVLLVDDHEL…EVVSAIRSVY (117 aa). 4-aspartylphosphate is present on Asp54. Residues 143 to 208 enclose the HTH luxR-type domain; that stretch reads TESPFASLSE…ELTHLAIRHG (66 aa). A DNA-binding region (H-T-H motif) is located at residues 167-186; it reads VNEISEQLNLSPKTVNSYRY.

In terms of processing, phosphorylated and activated by BarA.

Its subcellular location is the cytoplasm. Member of the two-component regulatory system UvrY/BarA involved in the regulation of carbon metabolism via the CsrA/CsrB regulatory system. UvrY activates the transcription of the untranslated csrB RNA and of barA, in an autoregulatory loop. Mediates the effects of CsrA on csrB RNA by BarA-dependent and BarA-independent mechanisms. The protein is Response regulator UvrY (uvrY) of Escherichia coli (strain K12).